A 67-amino-acid chain; its full sequence is Large ribosomal subunit protein uL29 (67 aa).

This sequence belongs to the universal ribosomal protein uL29 family.

The sequence is that of Large ribosomal subunit protein uL29 from Rubrobacter xylanophilus (strain DSM 9941 / JCM 11954 / NBRC 16129 / PRD-1).